We begin with the raw amino-acid sequence, 371 residues long: Phosphate acyltransferase (371 aa).

This sequence belongs to the PlsX family. Homodimer. Probably interacts with PlsY.

Its subcellular location is the cytoplasm. It carries out the reaction a fatty acyl-[ACP] + phosphate = an acyl phosphate + holo-[ACP]. It participates in lipid metabolism; phospholipid metabolism. In terms of biological role, catalyzes the reversible formation of acyl-phosphate (acyl-PO(4)) from acyl-[acyl-carrier-protein] (acyl-ACP). This enzyme utilizes acyl-ACP as fatty acyl donor, but not acyl-CoA. The protein is Phosphate acyltransferase of Polaromonas sp. (strain JS666 / ATCC BAA-500).